We begin with the raw amino-acid sequence, 156 residues long: 6,7-dimethyl-8-ribityllumazine synthase (156 aa).

Residues Phe-22, 57 to 59 (AVE), and 81 to 83 (SVI) contribute to the 5-amino-6-(D-ribitylamino)uracil site. Residue 86–87 (GT) coordinates (2S)-2-hydroxy-3-oxobutyl phosphate. Catalysis depends on His-89, which acts as the Proton donor. Phe-114 serves as a coordination point for 5-amino-6-(D-ribitylamino)uracil. Arg-128 provides a ligand contact to (2S)-2-hydroxy-3-oxobutyl phosphate.

This sequence belongs to the DMRL synthase family. As to quaternary structure, forms an icosahedral capsid composed of 60 subunits, arranged as a dodecamer of pentamers.

The enzyme catalyses (2S)-2-hydroxy-3-oxobutyl phosphate + 5-amino-6-(D-ribitylamino)uracil = 6,7-dimethyl-8-(1-D-ribityl)lumazine + phosphate + 2 H2O + H(+). It participates in cofactor biosynthesis; riboflavin biosynthesis; riboflavin from 2-hydroxy-3-oxobutyl phosphate and 5-amino-6-(D-ribitylamino)uracil: step 1/2. Catalyzes the formation of 6,7-dimethyl-8-ribityllumazine by condensation of 5-amino-6-(D-ribitylamino)uracil with 3,4-dihydroxy-2-butanone 4-phosphate. This is the penultimate step in the biosynthesis of riboflavin. This chain is 6,7-dimethyl-8-ribityllumazine synthase, found in Aliivibrio salmonicida (strain LFI1238) (Vibrio salmonicida (strain LFI1238)).